A 256-amino-acid chain; its full sequence is Isoprenyl transferase (256 aa).

Residues 1 to 22 are disordered; that stretch reads MLEKFSKWKGNRSNHTTPSHSL. Asp36 is an active-site residue. Mg(2+) is bound at residue Asp36. Residues 37–40, Trp41, Arg49, His53, and 81–83 each bind substrate; these read GNGR and STE. Asn84 (proton acceptor) is an active-site residue. Substrate is bound by residues Trp85, Arg87, Arg204, and 210–212; that span reads RLS. Residue Glu223 participates in Mg(2+) binding.

It belongs to the UPP synthase family. Homodimer. Mg(2+) serves as cofactor.

Catalyzes the condensation of isopentenyl diphosphate (IPP) with allylic pyrophosphates generating different type of terpenoids. The polypeptide is Isoprenyl transferase (Halalkalibacterium halodurans (strain ATCC BAA-125 / DSM 18197 / FERM 7344 / JCM 9153 / C-125) (Bacillus halodurans)).